Here is a 328-residue protein sequence, read N- to C-terminus: MHTLIERLEKVTNNKELEEVRLNALGKKGVFADKFNQLKNLNGGEKNAFAKEIHHYKQAFEKAFELKKKAIIELELEERLKKEKIDVSLFNTTKTSSSHPLNYTKNKIIEFFTPLGYKLEIGSLVEDDFHNFSALNLPPYHPARDMQDTFYFKDHKLLRTHTSPVQIHTMQEQTPPIKMICLGETFRRDYDLTHTPMFHQIEGLVVDQKGNIHFTHLKGVIEDFLHYFFGGVKLRWRSSFFPFTEPSAEVDISCVFCKQEGCRVCSHMGWLEVLGCGMVNNAVFEAIGYKGMSGFAFGMGIERLAMLTCQINDLRSFFETDLRVLEGF.

A Mg(2+)-binding site is contributed by Glu245.

Belongs to the class-II aminoacyl-tRNA synthetase family. Phe-tRNA synthetase alpha subunit type 1 subfamily. As to quaternary structure, tetramer of two alpha and two beta subunits. It depends on Mg(2+) as a cofactor.

Its subcellular location is the cytoplasm. The enzyme catalyses tRNA(Phe) + L-phenylalanine + ATP = L-phenylalanyl-tRNA(Phe) + AMP + diphosphate + H(+). The polypeptide is Phenylalanine--tRNA ligase alpha subunit (Helicobacter acinonychis (strain Sheeba)).